The following is a 37-amino-acid chain: Large ribosomal subunit protein bL36c (37 aa).

It belongs to the bacterial ribosomal protein bL36 family.

Its subcellular location is the plastid. It localises to the chloroplast. The polypeptide is Large ribosomal subunit protein bL36c (Mesembryanthemum crystallinum (Common ice plant)).